The following is a 307-amino-acid chain: Coproporphyrin III ferrochelatase (307 aa).

Fe-coproporphyrin III is bound by residues tyrosine 12, arginine 29, 45-46, serine 53, and tyrosine 124; that span reads RY. Histidine 181 and glutamate 263 together coordinate Fe(2+).

This sequence belongs to the ferrochelatase family.

It is found in the cytoplasm. It carries out the reaction Fe-coproporphyrin III + 2 H(+) = coproporphyrin III + Fe(2+). The protein operates within porphyrin-containing compound metabolism; protoheme biosynthesis. Involved in coproporphyrin-dependent heme b biosynthesis. Catalyzes the insertion of ferrous iron into coproporphyrin III to form Fe-coproporphyrin III. The protein is Coproporphyrin III ferrochelatase of Staphylococcus saprophyticus subsp. saprophyticus (strain ATCC 15305 / DSM 20229 / NCIMB 8711 / NCTC 7292 / S-41).